A 378-amino-acid chain; its full sequence is MAKKLKKNEEITKKFGDERRKALDDALKNIEKDFGKGAVMRLGERAEQKVQVMSSGSLALDIALGAGGYPKGRIIEIYGPESSGKTTVALHAVAQAQKEGGIAAFIDAEHALDPAYAAALGVNIDELLLAQPDSGEQGLEIAGKLIDSGAVDLVVVDSVAALVPRAEIDGDIGDSHVGLQARMMSQAMRKLSASINKTKTIAIFINQLREKVGVMFGNPETTPGGRALKFYASVRLDVRGTTQIKGTGDQKDSSIGKETKIKVVKNKVAPPFKVAEVEIMYGEGISRTGELVKIASDLDIIQKAGAWFSYNGEKIGQGSENAKRYLADHPQLFDEIDRKVRVKFGLLEESEEESAMAVASEETDDLALDLDNGIEIED.

Residue 79–86 coordinates ATP; that stretch reads GPESSGKT.

It belongs to the RecA family.

The protein localises to the cytoplasm. Its function is as follows. Can catalyze the hydrolysis of ATP in the presence of single-stranded DNA, the ATP-dependent uptake of single-stranded DNA by duplex DNA, and the ATP-dependent hybridization of homologous single-stranded DNAs. It interacts with LexA causing its activation and leading to its autocatalytic cleavage. The sequence is that of Protein RecA from Streptococcus pyogenes serotype M49 (strain NZ131).